The following is a 444-amino-acid chain: Tol-Pal system protein TolB (444 aa).

Residues 1 to 19 (MRNIIYFILSLLFSVTSYA) form the signal peptide.

This sequence belongs to the TolB family. As to quaternary structure, the Tol-Pal system is composed of five core proteins: the inner membrane proteins TolA, TolQ and TolR, the periplasmic protein TolB and the outer membrane protein Pal. They form a network linking the inner and outer membranes and the peptidoglycan layer.

Its subcellular location is the periplasm. In terms of biological role, part of the Tol-Pal system, which plays a role in outer membrane invagination during cell division and is important for maintaining outer membrane integrity. This Rickettsia rickettsii (strain Iowa) protein is Tol-Pal system protein TolB.